The primary structure comprises 428 residues: Glucose-1-phosphate adenylyltransferase (428 aa).

Alpha-D-glucose 1-phosphate-binding positions include tyrosine 99, glycine 164, 179–180 (EK), and serine 190.

The protein belongs to the bacterial/plant glucose-1-phosphate adenylyltransferase family. As to quaternary structure, homotetramer.

The catalysed reaction is alpha-D-glucose 1-phosphate + ATP + H(+) = ADP-alpha-D-glucose + diphosphate. The protein operates within glycan biosynthesis; glycogen biosynthesis. Its function is as follows. Involved in the biosynthesis of ADP-glucose, a building block required for the elongation reactions to produce glycogen. Catalyzes the reaction between ATP and alpha-D-glucose 1-phosphate (G1P) to produce pyrophosphate and ADP-Glc. This chain is Glucose-1-phosphate adenylyltransferase, found in Thermomicrobium roseum (strain ATCC 27502 / DSM 5159 / P-2).